The sequence spans 951 residues: Sodium/potassium exporting P-type ATPase 1 (951 aa).

The Cytoplasmic segment spans residues 1 to 57; sequence MMGANSTEWHGQSVEQVTELLGTDVERGLKESVVGQLQKQFGPNELKGQRGVNPWKV. The chain crosses the membrane as a helical span at residues 58 to 78; the sequence is LLAQFTNGLTVILLIATVVSF. Over 79 to 82 the chain is Extracellular; it reads AVQD. The helical transmembrane segment at 83–103 threads the bilayer; the sequence is HAEGGVLAFVIIFNASVGFVQ. The Cytoplasmic portion of the chain corresponds to 104–247; the sequence is EYRAEKTMDA…TPMQKRLNRM (144 aa). A helical membrane pass occupies residues 248–268; it reads AYILFGISLVLAVIVFAVNKF. The Extracellular portion of the chain corresponds to 269 to 273; the sequence is EFNTD. A helical transmembrane segment spans residues 274 to 294; it reads IIIYAVSLGIAVIPEGLIAVI. Topologically, residues 295–717 are cytoplasmic; it reads TIVMALGVRR…GRRIFSNIRK (423 aa). Residue D330 is the 4-aspartylphosphate intermediate of the active site. Residues D330 and T332 each contribute to the Mg(2+) site. Positions 332, 414, 467, 511, 575, 576, 577, 636, and 642 each coordinate ATP. D661 lines the Mg(2+) pocket. N664 is a binding site for ATP. A helical transmembrane segment spans residues 718-738; the sequence is FILHLVSTNVGEVIVLIIGLA. Topologically, residues 739–743 are extracellular; that stretch reads FKDRN. Residues 744-764 traverse the membrane as a helical segment; it reads GVSVFPLAPVQILFMNMVTST. The Cytoplasmic portion of the chain corresponds to 765-799; it reads PPAMALGVEAASKDTMKVPPHTKGLFGKEVLADMM. Residues 800 to 820 traverse the membrane as a helical segment; that stretch reads VYGIIMGSLILVDWVLVIYAF. Over 821-840 the chain is Extracellular; that stretch reads GDSQLGLECNSDRMLNECNT. The chain crosses the membrane as a helical span at residues 841-861; that stretch reads VFRARSTIMVALIWMLLLHAY. The Cytoplasmic portion of the chain corresponds to 862–885; it reads NCRHPRASLFTAEGGGASKLFSNR. A helical transmembrane segment spans residues 886 to 906; sequence LLVWSVLLGSLMPIPTVYIPT. Topologically, residues 907-916 are extracellular; sequence LNTKIFKQET. The helical transmembrane segment at 917-937 threads the bilayer; the sequence is ISWEWSIVVVSVVAFFFLSEL. Over 938–951 the chain is Cytoplasmic; it reads YKLIKRNVMTSRVI.

This sequence belongs to the cation transport ATPase (P-type) (TC 3.A.3) family. Type IID subfamily. Requires Mg(2+) as cofactor. The active site is phosphorylated in presence of sodium or potassium and in conditions of higher pH. Not phosphorylated in presence of calcium ions.

It localises to the cell membrane. It catalyses the reaction Na(+)(in) + ATP + H2O = Na(+)(out) + ADP + phosphate + H(+). The catalysed reaction is K(+)(in) + ATP + H2O = K(+)(out) + ADP + phosphate + H(+). Functionally, catalyzes the hydrolysis of ATP coupled with the export of sodium and potassium from the cell. Appears to export potassium more efficiently than sodium. May transport other cations such as lithium. Sodium/potassium efflux ATPases are involved in salt tolerance and maintaining the membrane potential across the plasma membrane in high salinity (Na+) or alkaline (K+) environments. In Marchantia polymorpha (Common liverwort), this protein is Sodium/potassium exporting P-type ATPase 1.